A 253-amino-acid polypeptide reads, in one-letter code: Indole-3-glycerol phosphate synthase (253 aa).

The protein belongs to the TrpC family.

It catalyses the reaction 1-(2-carboxyphenylamino)-1-deoxy-D-ribulose 5-phosphate + H(+) = (1S,2R)-1-C-(indol-3-yl)glycerol 3-phosphate + CO2 + H2O. It functions in the pathway amino-acid biosynthesis; L-tryptophan biosynthesis; L-tryptophan from chorismate: step 4/5. The sequence is that of Indole-3-glycerol phosphate synthase from Petrotoga mobilis (strain DSM 10674 / SJ95).